The chain runs to 130 residues: Fumarate reductase subunit C (130 aa).

Transmembrane regions (helical) follow at residues 37 to 57, 60 to 80, and 109 to 129; these read VWFSILLIYGVFALKSGPAGW, FVGFLQNPLVLLINIITLLAA, and VIKALWVVTIVATAIILAVAL.

Belongs to the FrdC family. As to quaternary structure, part of an enzyme complex containing four subunits: a flavoprotein (FrdA), an iron-sulfur protein (FrdB), and two hydrophobic anchor proteins (FrdC and FrdD).

It localises to the cell inner membrane. Functionally, two distinct, membrane-bound, FAD-containing enzymes are responsible for the catalysis of fumarate and succinate interconversion; fumarate reductase is used in anaerobic growth, and succinate dehydrogenase is used in aerobic growth. Anchors the catalytic components of the fumarate reductase complex to the cell inner membrane, binds quinones. This Yersinia enterocolitica serotype O:8 / biotype 1B (strain NCTC 13174 / 8081) protein is Fumarate reductase subunit C.